A 455-amino-acid polypeptide reads, in one-letter code: Phosphoglucosamine mutase (455 aa).

Ser104 functions as the Phosphoserine intermediate in the catalytic mechanism. Positions 104, 253, 255, and 257 each coordinate Mg(2+). Position 104 is a phosphoserine (Ser104).

This sequence belongs to the phosphohexose mutase family. Requires Mg(2+) as cofactor. In terms of processing, activated by phosphorylation.

It catalyses the reaction alpha-D-glucosamine 1-phosphate = D-glucosamine 6-phosphate. Its function is as follows. Catalyzes the conversion of glucosamine-6-phosphate to glucosamine-1-phosphate. The protein is Phosphoglucosamine mutase of Psychrobacter arcticus (strain DSM 17307 / VKM B-2377 / 273-4).